Here is a 278-residue protein sequence, read N- to C-terminus: Urease accessory protein UreD (278 aa).

Belongs to the UreD family. UreD, UreF and UreG form a complex that acts as a GTP-hydrolysis-dependent molecular chaperone, activating the urease apoprotein by helping to assemble the nickel containing metallocenter of UreC. The UreE protein probably delivers the nickel.

Its subcellular location is the cytoplasm. Functionally, required for maturation of urease via the functional incorporation of the urease nickel metallocenter. The chain is Urease accessory protein UreD from Staphylococcus aureus (strain JH1).